Here is a 407-residue protein sequence, read N- to C-terminus: [Pyruvate dehydrogenase (acetyl-transferring)] kinase isozyme 2, mitochondrial (407 aa).

Positions 135–364 (LEYKDTYGDD…DAVIYLKALS (230 aa)) constitute a Histidine kinase domain. Phosphotyrosine is present on residues tyrosine 215 and tyrosine 216. ATP contacts are provided by residues 251 to 258 (ELFKNAMR), aspartate 290, 309 to 310 (ST), and 325 to 330 (GFGYGL). Lysine 376 bears the N6-succinyllysine mark.

The protein belongs to the PDK/BCKDK protein kinase family. In terms of assembly, homodimer, and heterodimer with PDK1. Interacts with the pyruvate dehydrogenase complex subunit DLAT, and is part of the multimeric pyruvate dehydrogenase complex that contains multiple copies of pyruvate dehydrogenase (E1), dihydrolipoamide acetyltransferase (DLAT, E2) and lipoamide dehydrogenase (DLD, E3). Detected in heart (at protein level). Highest level of expression in heart and skeletal muscle and the lowest in spleen and lung. Liver, kidney, brain and testis levels are intermediate.

It is found in the mitochondrion matrix. It carries out the reaction L-seryl-[pyruvate dehydrogenase E1 alpha subunit] + ATP = O-phospho-L-seryl-[pyruvate dehydrogenase E1 alpha subunit] + ADP + H(+). Its activity is regulated as follows. Activity increases in response to increased acetyl-CoA and NADH levels and upon binding to the pyruvate dehydrogenase subunit DLAT. Inhibited by ADP and pyruvate; these compounds interfere with DLAT binding and thereby inhibit kinase activity. Inhibited by dichloroacetate. Inhibited by AZD7545; this compound interferes with DLAT binding and thereby inhibits kinase activity. Reactive oxygen species cause the formation of disulfide bonds, and thereby inhibit the enzyme. Its function is as follows. Kinase that plays a key role in the regulation of glucose and fatty acid metabolism and homeostasis via phosphorylation of the pyruvate dehydrogenase subunits PDHA1 and PDHA2. This inhibits pyruvate dehydrogenase activity, and thereby regulates metabolite flux through the tricarboxylic acid cycle, down-regulates aerobic respiration and inhibits the formation of acetyl-coenzyme A from pyruvate. Inhibition of pyruvate dehydrogenase decreases glucose utilization and increases fat metabolism. Mediates cellular responses to insulin. Plays an important role in maintaining normal blood glucose levels and in metabolic adaptation to nutrient availability. Via its regulation of pyruvate dehydrogenase activity, plays an important role in maintaining normal blood pH and in preventing the accumulation of ketone bodies under starvation. Plays a role in the regulation of cell proliferation and in resistance to apoptosis under oxidative stress. Plays a role in p53/TP53-mediated apoptosis. The protein is [Pyruvate dehydrogenase (acetyl-transferring)] kinase isozyme 2, mitochondrial (Pdk2) of Rattus norvegicus (Rat).